Consider the following 346-residue polypeptide: Holliday junction branch migration complex subunit RuvB (346 aa).

A large ATPase domain (RuvB-L) region spans residues 1 to 182 (MTRVISGEPQ…FGIPIRLEFY (182 aa)). L21, R22, G63, K66, T67, T68, R172, Y182, and R219 together coordinate ATP. Residue T67 participates in Mg(2+) binding. The small ATPAse domain (RuvB-S) stretch occupies residues 183–253 (TPAELRHVLQ…AAAMALARLE (71 aa)). The segment at 256–346 (ESGLDSLDRR…QAQGALFDEG (91 aa)) is head domain (RuvB-H). DNA-binding residues include R292, R311, and R316.

It belongs to the RuvB family. In terms of assembly, homohexamer. Forms an RuvA(8)-RuvB(12)-Holliday junction (HJ) complex. HJ DNA is sandwiched between 2 RuvA tetramers; dsDNA enters through RuvA and exits via RuvB. An RuvB hexamer assembles on each DNA strand where it exits the tetramer. Each RuvB hexamer is contacted by two RuvA subunits (via domain III) on 2 adjacent RuvB subunits; this complex drives branch migration. In the full resolvosome a probable DNA-RuvA(4)-RuvB(12)-RuvC(2) complex forms which resolves the HJ.

Its subcellular location is the cytoplasm. The catalysed reaction is ATP + H2O = ADP + phosphate + H(+). Functionally, the RuvA-RuvB-RuvC complex processes Holliday junction (HJ) DNA during genetic recombination and DNA repair, while the RuvA-RuvB complex plays an important role in the rescue of blocked DNA replication forks via replication fork reversal (RFR). RuvA specifically binds to HJ cruciform DNA, conferring on it an open structure. The RuvB hexamer acts as an ATP-dependent pump, pulling dsDNA into and through the RuvAB complex. RuvB forms 2 homohexamers on either side of HJ DNA bound by 1 or 2 RuvA tetramers; 4 subunits per hexamer contact DNA at a time. Coordinated motions by a converter formed by DNA-disengaged RuvB subunits stimulates ATP hydrolysis and nucleotide exchange. Immobilization of the converter enables RuvB to convert the ATP-contained energy into a lever motion, pulling 2 nucleotides of DNA out of the RuvA tetramer per ATP hydrolyzed, thus driving DNA branch migration. The RuvB motors rotate together with the DNA substrate, which together with the progressing nucleotide cycle form the mechanistic basis for DNA recombination by continuous HJ branch migration. Branch migration allows RuvC to scan DNA until it finds its consensus sequence, where it cleaves and resolves cruciform DNA. The chain is Holliday junction branch migration complex subunit RuvB from Caulobacter vibrioides (strain ATCC 19089 / CIP 103742 / CB 15) (Caulobacter crescentus).